The chain runs to 480 residues: Vacuolar protein sorting-associated protein 9A (480 aa).

A VPS9 domain is found at 111-255; the sequence is VKSDEELFEK…IWNIDGESLS (145 aa). Residues Asn-189 and Asp-194 each contribute to the GTP site. Positions 276-288 are enriched in polar residues; sequence SASSENQDNQNNL. 2 disordered regions span residues 276 to 338 and 418 to 480; these read SASS…VQSI and ESEE…PEHA. The segment covering 289–305 has biased composition (basic and acidic residues); sequence DVREQKSQTLKASRDSD. 3 stretches are compositionally biased toward polar residues: residues 327–338, 427–437, and 451–461; these read ASSNPVERVQSI, NAVNFSEGSSK, and VDNTGTQQTAV.

As to quaternary structure, interacts with RAB5A. Interacts with GPA3 (via C-terminus).

The protein resides in the cytoplasm. It is found in the golgi apparatus. It localises to the trans-Golgi network. Its subcellular location is the prevacuolar compartment. Its function is as follows. Functions as a guanine nucleotide exchange factor (GEF) for Rab small GTPases. Activates specifically RAB5A protein. Functions cooperatively with RAB5A to regulate post-Golgi dense vesicle-mediated transport of storage proteins to the type II protein bodies (PBII) protein storage vacuoles in developing endosperm. The chain is Vacuolar protein sorting-associated protein 9A from Oryza sativa subsp. japonica (Rice).